The following is a 314-amino-acid chain: Transmembrane protein 248 (314 aa).

A helical transmembrane segment spans residues 21–41 (VVFMISVSAMAIAFLTLGYFF). Residues 78–106 (LTNDTTTPESTMTSGQARASTQSPQALED) are disordered. The span at 80-102 (NDTTTPESTMTSGQARASTQSPQ) shows a compositional bias: polar residues. Helical transmembrane passes span 179-199 (QVVF…PVTV), 236-258 (FWCY…TVIV), and 270-290 (LMHT…YAVI).

It belongs to the TMEM248 family.

The protein localises to the membrane. The protein is Transmembrane protein 248 (TMEM248) of Homo sapiens (Human).